The chain runs to 238 residues: Ribonuclease PH (238 aa).

Phosphate-binding positions include R86 and 124–126; that span reads GTR.

This sequence belongs to the RNase PH family. Homohexameric ring arranged as a trimer of dimers.

It catalyses the reaction tRNA(n+1) + phosphate = tRNA(n) + a ribonucleoside 5'-diphosphate. Functionally, phosphorolytic 3'-5' exoribonuclease that plays an important role in tRNA 3'-end maturation. Removes nucleotide residues following the 3'-CCA terminus of tRNAs; can also add nucleotides to the ends of RNA molecules by using nucleoside diphosphates as substrates, but this may not be physiologically important. Probably plays a role in initiation of 16S rRNA degradation (leading to ribosome degradation) during starvation. This Maricaulis maris (strain MCS10) (Caulobacter maris) protein is Ribonuclease PH.